The following is a 326-amino-acid chain: MYGIEYTTALTFLISFLLLRYILKLVVKIMDFIVYRFLFVILILSPCIKAQNYGINLPITGSMDMAYANSTQSETFLTSTLCLYYPKEAATEINDNSWKDTLSQLFMTKGWPTGSVYFKEYNDIAVFSIDPQLYCDYNVVLMKYDASLQMDMSELADLILNEWLCNPMDITLYYYQQTDETNKWISMGSSCTIKVCPLNTQTLGIGCLTTDATTFEEIATAEKLAITDVVDGVNHKLNVTTTTCTIRNCKKLGPRENVAVIQIGGSDVIDITADPTTAPQTERMMRINWKKWWQVFYTVVDYVNQIISAMSKRSRSLNSAAFYYRV.

An N-terminal signal peptide occupies residues 1-50; the sequence is MYGIEYTTALTFLISFLLLRYILKLVVKIMDFIVYRFLFVILILSPCIKA. The N-linked (GlcNAc...) asparagine; by host glycan is linked to Asn69. Intrachain disulfides connect Cys82/Cys135, Cys165/Cys249, Cys191/Cys244, and Cys196/Cys207. Residue Asp95 coordinates Ca(2+). The tract at residues 165 to 167 is CNP motif; interaction with ITGAV/ITGB3; sequence CNP. Positions 177, 206, 214, 216, 228, 229, and 231 each coordinate Ca(2+). Asn238 is a glycosylation site (N-linked (GlcNAc...) asparagine; by host). Positions 253–255 are GPR motif; interaction with ITGAX/ITGB2; it reads GPR. Position 301 (Asp301) interacts with Ca(2+).

It belongs to the rotavirus VP7 family. As to quaternary structure, homotrimer; disulfide-linked. 2 Ca(2+) ions bound at each subunit interface in the trimer hold the trimer together. Interacts with the intermediate capsid protein VP6. Interacts with the outer capsid protein VP5*. In terms of processing, N-glycosylated. The N-terminus is blocked possibly by pyroglutamic acid.

The protein resides in the virion. The protein localises to the host endoplasmic reticulum lumen. Its function is as follows. Calcium-binding protein that interacts with rotavirus cell receptors once the initial attachment by VP4 has been achieved. Rotavirus attachment and entry into the host cell probably involves multiple sequential contacts between the outer capsid proteins VP4 and VP7, and the cell receptors. Following entry into the host cell, low intracellular or intravesicular Ca(2+) concentration probably causes the calcium-stabilized VP7 trimers to dissociate from the virion. This step is probably necessary for the membrane-disrupting entry step and the release of VP4, which is locked onto the virion by VP7. This is Outer capsid glycoprotein VP7 from Mus musculus musculus (eastern European house mouse).